The primary structure comprises 263 residues: Neurogenin-2 (263 aa).

The disordered stretch occupies residues 20–76; the sequence is LGSASPASATLTPMSSSADEEEDEELRRPGSARGQRGAEAEQGVQGSPASGAGGCRP. The segment covering 24–36 has biased composition (polar residues); sequence SPASATLTPMSSS. Positions 112-164 constitute a bHLH domain; it reads TRRLKANNRERNRMHNLNAALDALREVLPTFPEDAKLTKIETLRFAHNYIWAL. Residues 197 to 231 are compositionally biased toward low complexity; it reads LGASGDSPSPPSSWSCTNSPASSSNSTSPYSCTLS. Positions 197 to 253 are disordered; that stretch reads LGASGDSPSPPSSWSCTNSPASSSNSTSPYSCTLSPASPGSDVDYWQPPPPEKHRYA.

Efficient DNA binding requires dimerization with another bHLH protein.

It is found in the nucleus. In terms of biological role, transcriptional regulator. Involved in neuronal differentiation. Activates transcription by binding to the E box (5'-CANNTG-3'). This Mus musculus (Mouse) protein is Neurogenin-2 (Neurog2).